Here is a 292-residue protein sequence, read N- to C-terminus: Aspartate carbamoyltransferase catalytic subunit (292 aa).

Residues R49 and T50 each coordinate carbamoyl phosphate. K77 provides a ligand contact to L-aspartate. The carbamoyl phosphate site is built by R99, H127, and Q130. Positions 161 and 211 each coordinate L-aspartate. Carbamoyl phosphate is bound by residues G250 and P251.

The protein belongs to the aspartate/ornithine carbamoyltransferase superfamily. ATCase family. Heterododecamer (2C3:3R2) of six catalytic PyrB chains organized as two trimers (C3), and six regulatory PyrI chains organized as three dimers (R2).

It carries out the reaction carbamoyl phosphate + L-aspartate = N-carbamoyl-L-aspartate + phosphate + H(+). It participates in pyrimidine metabolism; UMP biosynthesis via de novo pathway; (S)-dihydroorotate from bicarbonate: step 2/3. In terms of biological role, catalyzes the condensation of carbamoyl phosphate and aspartate to form carbamoyl aspartate and inorganic phosphate, the committed step in the de novo pyrimidine nucleotide biosynthesis pathway. In Campylobacter lari (strain RM2100 / D67 / ATCC BAA-1060), this protein is Aspartate carbamoyltransferase catalytic subunit.